We begin with the raw amino-acid sequence, 999 residues long: Probable hemoglobin and hemoglobin-haptoglobin-binding protein 4 (999 aa).

An N-terminal signal peptide occupies residues 1-24 (MTNFRLNVLAYSVMLGLTASVAYA). The tract at residues 25 to 52 (EPTNQPTNQPTNQPTNQPTNQPTNQNSN) is disordered. Tandem repeats lie at residues 26–29 (PTNQ), 30–33 (PTNQ), 34–37 (PTNQ), 38–41 (PTNQ), 42–45 (PTNQ), and 46–49 (PTNQ). Residues 26–49 (PTNQPTNQPTNQPTNQPTNQPTNQ) form a 6 X 4 AA tandem repeats of P-T-N-Q region. The segment covering 26–50 (PTNQPTNQPTNQPTNQPTNQPTNQN) has biased composition (low complexity). A TonB box motif is present at residues 58 to 65 (EQINVLGS). One can recognise a TBDR plug domain in the interval 68–195 (NNDNTPPKIA…LGGAVLFETK (128 aa)). The 797-residue stretch at 203–999 (EKDWHIGYKA…NYKLSAEITF (797 aa)) folds into the TBDR beta-barrel domain. The TonB C-terminal box signature appears at 982–999 (NRFYSPGRNYKLSAEITF).

The protein belongs to the TonB-dependent receptor family. Hemoglobin/haptoglobin binding protein subfamily.

It is found in the cell outer membrane. Its function is as follows. Acts as a receptor for hemoglobin or the hemoglobin/haptoglobin complex of the human host and is required for heme uptake. This Haemophilus influenzae (strain ATCC 51907 / DSM 11121 / KW20 / Rd) protein is Probable hemoglobin and hemoglobin-haptoglobin-binding protein 4.